A 396-amino-acid polypeptide reads, in one-letter code: Elongation factor Tu (396 aa).

Residues 10–206 form the tr-type G domain; sequence KPHVNVGTIG…ALDSYIPEPT (197 aa). The G1 stretch occupies residues 19–26; it reads GHVDHGKT. 19–26 contacts GTP; it reads GHVDHGKT. Mg(2+) is bound at residue threonine 26. Positions 60–64 are G2; that stretch reads GITIS. Positions 81–84 are G3; the sequence is DCPG. GTP is bound by residues 81–85 and 136–139; these read DCPGH and NKAD. Positions 136–139 are G4; the sequence is NKAD. The segment at 174–176 is G5; it reads SAL.

This sequence belongs to the TRAFAC class translation factor GTPase superfamily. Classic translation factor GTPase family. EF-Tu/EF-1A subfamily. As to quaternary structure, monomer.

The protein resides in the cytoplasm. It carries out the reaction GTP + H2O = GDP + phosphate + H(+). Its function is as follows. GTP hydrolase that promotes the GTP-dependent binding of aminoacyl-tRNA to the A-site of ribosomes during protein biosynthesis. This is Elongation factor Tu from Hydrogenovibrio crunogenus (strain DSM 25203 / XCL-2) (Thiomicrospira crunogena).